The sequence spans 440 residues: Thymidine phosphorylase (440 aa).

The protein belongs to the thymidine/pyrimidine-nucleoside phosphorylase family. As to quaternary structure, homodimer.

It carries out the reaction thymidine + phosphate = 2-deoxy-alpha-D-ribose 1-phosphate + thymine. The protein operates within pyrimidine metabolism; dTMP biosynthesis via salvage pathway; dTMP from thymine: step 1/2. Functionally, the enzymes which catalyze the reversible phosphorolysis of pyrimidine nucleosides are involved in the degradation of these compounds and in their utilization as carbon and energy sources, or in the rescue of pyrimidine bases for nucleotide synthesis. In Yersinia pestis, this protein is Thymidine phosphorylase.